Reading from the N-terminus, the 414-residue chain is Tyrosine--tRNA ligase (414 aa).

The short motif at 57–66 (PSAPDVHIGH) is the 'HIGH' region element. The 'KMSKS' region signature appears at 241–245 (KMSKS). K244 contributes to the ATP binding site. One can recognise an S4 RNA-binding domain in the interval 352–413 (VPLIDLLVTL…GKRKFAKLSL (62 aa)).

It belongs to the class-I aminoacyl-tRNA synthetase family. TyrS type 2 subfamily. As to quaternary structure, homodimer.

The protein localises to the cytoplasm. It carries out the reaction tRNA(Tyr) + L-tyrosine + ATP = L-tyrosyl-tRNA(Tyr) + AMP + diphosphate + H(+). In terms of biological role, catalyzes the attachment of tyrosine to tRNA(Tyr) in a two-step reaction: tyrosine is first activated by ATP to form Tyr-AMP and then transferred to the acceptor end of tRNA(Tyr). This Shouchella clausii (strain KSM-K16) (Alkalihalobacillus clausii) protein is Tyrosine--tRNA ligase.